The primary structure comprises 1148 residues: Transcription-repair-coupling factor (1148 aa).

The Helicase ATP-binding domain maps to 615 to 776; it reads DMCQPLAMDR…MSGMRDLSII (162 aa). Residue 628 to 635 participates in ATP binding; sequence GDVGFGKT. Residues 729-732 carry the DEEH box motif; the sequence is DEEH. The Helicase C-terminal domain maps to 798 to 951; that stretch reads VREAILREIL…GFALATHDLE (154 aa).

It in the N-terminal section; belongs to the UvrB family. This sequence in the C-terminal section; belongs to the helicase family. RecG subfamily. As to quaternary structure, monomer. Interacts with UvrA and RNAP.

It localises to the cytoplasm. In terms of biological role, couples transcription and DNA repair by recognizing RNA polymerase (RNAP) stalled at DNA lesions. Mediates ATP-dependent release of RNAP and its truncated transcript from the DNA, and recruitment of nucleotide excision repair machinery to the damaged site. Can also dissociate RNAP that is blocked by low concentration of nucleoside triphosphates or by physical obstruction, such as bound proteins. In addition, can rescue arrested complexes by promoting forward translocation. Has ATPase activity, which is required for removal of stalled RNAP, but seems to lack helicase activity. May act through a translocase activity that rewinds upstream DNA, leading either to translocation or to release of RNAP when the enzyme active site cannot continue elongation. This is Transcription-repair-coupling factor from Escherichia coli (strain K12).